A 177-amino-acid chain; its full sequence is Inner membrane protein p22 (177 aa).

Residues 1–7 are Intravirion-facing; that stretch reads MFNIKMT. Residues 8–28 form a helical membrane-spanning segment; it reads ISTLLIALIILVIIILVVFLY. Residues 29-177 lie on the Virion surface side of the membrane; sequence YKKQQPPKKV…IALPRNHKHA (149 aa).

Belongs to the asfivirus inner membrane protein p22 family.

Its subcellular location is the virion membrane. It localises to the host cell membrane. The chain is Inner membrane protein p22 from Ornithodoros (relapsing fever ticks).